The sequence spans 398 residues: Palmitoyl-[acyl-carrier-protein] 4-desaturase 3, chloroplastic (398 aa).

The transit peptide at 1 to 29 (MALRSLFLPNAFPNASSFRGGSRRGAAPR) directs the protein to the chloroplast. Residues Glu139, Glu177, His180, Glu230, Glu263, and His266 each contribute to the Fe cation site.

It belongs to the fatty acid desaturase type 2 family. In terms of assembly, homodimer. It depends on Fe(2+) as a cofactor. In terms of tissue distribution, preferentially expressed in the flower labellum. Low expression in leaves.

It localises to the plastid. Its subcellular location is the chloroplast stroma. It catalyses the reaction hexadecanoyl-[ACP] + 2 reduced [2Fe-2S]-[ferredoxin] + O2 + 2 H(+) = (4Z)-hexadecenoyl-[ACP] + 2 oxidized [2Fe-2S]-[ferredoxin] + 2 H2O. It functions in the pathway lipid metabolism; fatty acid metabolism. Its function is as follows. Converts palmitoyl-ACP to (4Z)-hexadec-4-enoyl-ACP by introduction of a cis double bond between carbons 4 and 5 of the acyl chain. This Ophrys arachnitiformis subsp. archipelagi (Orchid) protein is Palmitoyl-[acyl-carrier-protein] 4-desaturase 3, chloroplastic (SAD3).